Consider the following 373-residue polypeptide: Lipoyl amidotransferase LIPT1, mitochondrial (373 aa).

The transit peptide at 1–25 directs the protein to the mitochondrion; the sequence is MLIPFSMKNCFQLLCNCQVPAAGFK. The BPL/LPL catalytic domain maps to 57 to 243; that stretch reads LEGKPILFFW…EYAAYHQIDN (187 aa). Residues Y107, R151, K161, and T179 each coordinate (R)-lipoyl-5'-AMP.

It belongs to the LplA family. Highly expressed in skeletal muscle and heart, moderately in kidney and pancreas, and detected at lower levels in liver, brain, placenta and lung.

It localises to the mitochondrion. The enzyme catalyses N(6)-[(R)-lipoyl]-L-lysyl-[glycine-cleavage complex H protein] + L-lysyl-[lipoyl-carrier protein] = L-lysyl-[glycine-cleavage complex H protein] + N(6)-[(R)-lipoyl]-L-lysyl-[lipoyl-carrier protein]. It carries out the reaction (R)-lipoyl-5'-AMP + L-lysyl-[lipoyl-carrier protein] = N(6)-[(R)-lipoyl]-L-lysyl-[lipoyl-carrier protein] + AMP + 2 H(+). The protein operates within protein modification; protein lipoylation via exogenous pathway; protein N(6)-(lipoyl)lysine from lipoate: step 2/2. In terms of biological role, lipoyl amidotransferase that catalyzes the transfer of lipoyl moieties from lipoyl-protein H of the glycine cleavage system (lipoyl-GCSH) to E2 subunits of the pyruvate dehydrogenase complex (PDCE2). Unable to catalyze the transfer of octanoyl from octanoyl-GCSH to PDCE2. In vitro, it is also able to catalyze the transfer of the lipoyl group from lipoyl-AMP to the specific lysine residue of lipoyl domains of lipoate-dependent enzymes but this reaction may not be physiologically relevant. This is Lipoyl amidotransferase LIPT1, mitochondrial from Homo sapiens (Human).